A 396-amino-acid chain; its full sequence is UDP-galactose translocator (396 aa).

A run of 10 helical transmembrane segments spans residues 3–23 (AVGAGGSTAAPGPGAVSAGAL), 37–57 (YISLAVLVVQNASLILSIRYA), 65–85 (FFATTAVVMAEVLKGLTCLLL), 97–117 (LVLFLHEAVLVQYVDTLKLAV), 140–160 (TFQVTYQLKILTTALFSVLML), 169–189 (WASLLLLFTGVAIVQAQQAGG), 200–220 (GAGLAAVVASCLSSGFAGVYF), 238–258 (LGLFGTALGLVGLWWAEGTAV), 269–289 (PAVWGVVLNQAFGGLLVAVVV), and 315–335 (LFGFHVDPLFALGAGLVIGAV). The tract at residues 358–379 (PCVHQQPPGQPPPPQLSSHRGD) is disordered. Positions 392-396 (KVKGS) match the ER retention motif motif.

Belongs to the nucleotide-sugar transporter family. SLC35A subfamily. As to quaternary structure, interacts with SLC35A3; the interaction is reduced in the presence of SLC35A4. Found in a complex with SLC35A3 and SLC35A4. In terms of assembly, interacts with B4GALT4.

It is found in the endoplasmic reticulum membrane. It localises to the golgi apparatus membrane. The catalysed reaction is UMP(out) + UDP-alpha-D-galactose(in) = UMP(in) + UDP-alpha-D-galactose(out). It carries out the reaction UDP-N-acetyl-alpha-D-galactosamine(in) + UMP(out) = UDP-N-acetyl-alpha-D-galactosamine(out) + UMP(in). The enzyme catalyses UMP(out) + UDP-alpha-D-glucose(in) = UMP(in) + UDP-alpha-D-glucose(out). It catalyses the reaction UMP(out) + UDP-N-acetyl-alpha-D-glucosamine(in) = UMP(in) + UDP-N-acetyl-alpha-D-glucosamine(out). The catalysed reaction is UDP-alpha-D-galactose(in) + AMP(out) = UDP-alpha-D-galactose(out) + AMP(in). It carries out the reaction UDP-alpha-D-galactose(in) + CMP(out) = UDP-alpha-D-galactose(out) + CMP(in). The enzyme catalyses UDP-N-acetyl-alpha-D-galactosamine(out) + UDP-alpha-D-galactose(in) = UDP-N-acetyl-alpha-D-galactosamine(in) + UDP-alpha-D-galactose(out). It catalyses the reaction UDP-N-acetyl-alpha-D-glucosamine(out) + UDP-alpha-D-galactose(in) = UDP-N-acetyl-alpha-D-glucosamine(in) + UDP-alpha-D-galactose(out). The catalysed reaction is UDP-alpha-D-galactose(in) + UDP-alpha-D-glucose(out) = UDP-alpha-D-galactose(out) + UDP-alpha-D-glucose(in). It carries out the reaction UMP(out) + CMP(in) = UMP(in) + CMP(out). The enzyme catalyses UMP(out) + AMP(in) = UMP(in) + AMP(out). Functionally, transports uridine diphosphate galactose (UDP-galactose) from the cytosol into the Golgi apparatus, functioning as an antiporter that exchanges UDP-galactose for UMP. It is also able to exchange UDP-galactose for AMP and CMP, and to transport UDP-N-acetylgalactosamine (UDP-GalNAc) and other nucleotide sugars. As a provider of UDP-galactose to galactosyltransferases present in the Golgi apparatus, it is necessary for globotriaosylceramide/globoside (Gb3Cer) synthesis from lactosylceramide. This chain is UDP-galactose translocator, found in Homo sapiens (Human).